A 183-amino-acid chain; its full sequence is Gamma-crystallin N (183 aa).

Beta/gamma crystallin 'Greek key' domains follow at residues 6–46 (GKIT…RVES), 47–89 (GAWV…RPVG), 95–136 (FRID…KVYG), and 138–180 (GAWV…RRVL).

It belongs to the beta/gamma-crystallin family. As to quaternary structure, monomer. Detected in the auditory hindbrain where it is highly expressed in the medial nucleus of the trapezoid body, but also present in other nuclei of the superior olivary complex.

Crystallins are the dominant structural components of the vertebrate eye lens. Also plays an important role for integrity and function of auditory nuclei. In Rattus norvegicus (Rat), this protein is Gamma-crystallin N.